The primary structure comprises 600 residues: Aspartate--tRNA(Asp/Asn) ligase (600 aa).

An L-aspartate-binding site is contributed by Glu-181. The segment at 205–208 (QQYK) is aspartate. An L-aspartate-binding site is contributed by Arg-227. ATP-binding positions include 227-229 (RDE) and Gln-236. His-455 serves as a coordination point for L-aspartate. Position 490 (Glu-490) interacts with ATP. Arg-497 is an L-aspartate binding site. 542–545 (GLDR) contributes to the ATP binding site.

Belongs to the class-II aminoacyl-tRNA synthetase family. Type 1 subfamily. Homodimer.

It localises to the cytoplasm. It carries out the reaction tRNA(Asx) + L-aspartate + ATP = L-aspartyl-tRNA(Asx) + AMP + diphosphate. In terms of biological role, aspartyl-tRNA synthetase with relaxed tRNA specificity since it is able to aspartylate not only its cognate tRNA(Asp) but also tRNA(Asn). Reaction proceeds in two steps: L-aspartate is first activated by ATP to form Asp-AMP and then transferred to the acceptor end of tRNA(Asp/Asn). The chain is Aspartate--tRNA(Asp/Asn) ligase from Methylacidiphilum infernorum (isolate V4) (Methylokorus infernorum (strain V4)).